A 320-amino-acid chain; its full sequence is uncharacterized protein (320 aa).

This sequence belongs to the anthranilate phosphoribosyltransferase family.

This is an uncharacterized protein from Escherichia coli (strain K12).